Consider the following 589-residue polypeptide: Probable peptidoglycan D,D-transpeptidase FtsI (589 aa).

The helical transmembrane segment at 47–67 threads the bilayer; that stretch reads IFLVMGFFGFCFVGVSLGAGW. Serine 296 functions as the Acyl-ester intermediate in the catalytic mechanism.

This sequence belongs to the transpeptidase family. Interacts with FtsN and FtsW.

The protein localises to the cell inner membrane. The catalysed reaction is Preferential cleavage: (Ac)2-L-Lys-D-Ala-|-D-Ala. Also transpeptidation of peptidyl-alanyl moieties that are N-acyl substituents of D-alanine.. The protein operates within cell wall biogenesis; peptidoglycan biosynthesis. Catalyzes cross-linking of the peptidoglycan cell wall at the division septum. In Caulobacter vibrioides (strain NA1000 / CB15N) (Caulobacter crescentus), this protein is Probable peptidoglycan D,D-transpeptidase FtsI (ftsI).